The sequence spans 157 residues: Phosphopantetheine adenylyltransferase (157 aa).

T8 is a binding site for substrate. ATP-binding positions include 8–9 (TF) and H16. Substrate is bound by residues K40, T72, and R86. Residues 87-89 (GLR), E97, and 122-128 (YSFLSSS) each bind ATP.

It belongs to the bacterial CoaD family. In terms of assembly, homohexamer. Requires Mg(2+) as cofactor.

It localises to the cytoplasm. The enzyme catalyses (R)-4'-phosphopantetheine + ATP + H(+) = 3'-dephospho-CoA + diphosphate. It participates in cofactor biosynthesis; coenzyme A biosynthesis; CoA from (R)-pantothenate: step 4/5. Its function is as follows. Reversibly transfers an adenylyl group from ATP to 4'-phosphopantetheine, yielding dephospho-CoA (dPCoA) and pyrophosphate. This Prochlorococcus marinus (strain MIT 9312) protein is Phosphopantetheine adenylyltransferase.